The sequence spans 336 residues: Vomeronasal type-1 receptor 102 (336 aa).

Topologically, residues 1 to 42 (MVGVQICQGMTSEILFFSLQPQFSNMMNKNSRLHIDSNIRNT) are extracellular. The chain crosses the membrane as a helical span at residues 43–63 (FFTEIGIGVSANSLLLLFNIF). Over 64 to 75 (KFIHGQRSRLTD) the chain is Cytoplasmic. Residues 76-96 (LPIGLLSLINLLMLLIMACIA) form a helical membrane-spanning segment. Residues 97-120 (TDIFISCRRWDDIICKSLLYLYRT) are Extracellular-facing. The cysteines at positions 111 and 198 are disulfide-linked. The chain crosses the membrane as a helical span at residues 121 to 140 (FRGLSLSTTCLLSVLQAIIL). The Cytoplasmic portion of the chain corresponds to 141–157 (SPRSSCLAKYKHKPPHH). Residues 158–178 (IFCAMLFLSVLYMFISSHLLL) traverse the membrane as a helical segment. Residues 179–213 (SIIATPNLTTNDFIHVSQSCSILPMSYLMQSMFST) are Extracellular-facing. Asn185 carries an N-linked (GlcNAc...) asparagine glycan. The helical transmembrane segment at 214 to 234 (LLAIRNVFLISLIVLSTWYMV) threads the bilayer. Topologically, residues 235-264 (ALLCRHRKQTRHLQDTSLSRKASPEQRATR) are cytoplasmic. Residues 265–285 (SILMLRSLFVLMSIFDSIVSC) traverse the membrane as a helical segment. The Extracellular portion of the chain corresponds to 286 to 296 (SRTMYLNDPTS). The helical transmembrane segment at 297–317 (YSIQLLVVHIYATVSPFVFMI) threads the bilayer. The Cytoplasmic portion of the chain corresponds to 318-336 (TEKHIVNYLKSMYVRVLNV).

This sequence belongs to the G-protein coupled receptor 1 family. As to expression, expressed in 1-4% of neurons of the vomeronasal organ. Only one pheromone receptor gene may be expressed in a particular neuron. Not expressed in the main olfactory epithelium.

It is found in the cell membrane. In terms of biological role, putative pheromone receptor implicated in the regulation of social as well as reproductive behavior. The polypeptide is Vomeronasal type-1 receptor 102 (Vom1r102) (Rattus norvegicus (Rat)).